We begin with the raw amino-acid sequence, 95 residues long: UPF0045 protein CPE1503 (95 aa).

Belongs to the UPF0045 family.

This chain is UPF0045 protein CPE1503, found in Clostridium perfringens (strain 13 / Type A).